Here is a 160-residue protein sequence, read N- to C-terminus: Serine-protein kinase RsbW (160 aa).

This sequence belongs to the anti-sigma-factor family.

The enzyme catalyses L-seryl-[protein] + ATP = O-phospho-L-seryl-[protein] + ADP + H(+). It catalyses the reaction L-threonyl-[protein] + ATP = O-phospho-L-threonyl-[protein] + ADP + H(+). Negative regulator of sigma-B activity. Phosphorylates and inactivates its specific antagonist protein, RsbV. Upon phosphorylation of RsbV, RsbW is released and binds to sigma-B, thereby blocking its ability to form an RNA polymerase holoenzyme (E-sigma-B). The protein is Serine-protein kinase RsbW of Bacillus cereus (strain Q1).